Consider the following 420-residue polypeptide: uncharacterized protein (420 aa).

Belongs to the Rv1128c/1148c/1588c/1702c/1945/3466 family.

This is an uncharacterized protein from Mycobacterium tuberculosis (strain CDC 1551 / Oshkosh).